The following is a 102-amino-acid chain: MSNTTVPNAPQANSDSMVGYVLGPFFLITLVGVVVAVVMYVQKKKRVDRLRHHLLPMYSYDPAEELQEAEQELLSDVGDPKVVHGWQSSYQHKRMPLLDIKT.

A glycan (N-linked (GlcNAc...) asparagine) is linked at asparagine 3. Residues 21-41 traverse the membrane as a helical segment; it reads VLGPFFLITLVGVVVAVVMYV.

The protein resides in the membrane. In Mus musculus (Mouse), this protein is Small integral membrane protein 29.